Consider the following 214-residue polypeptide: Adenylate kinase (214 aa).

10-15 (GAGKGT) serves as a coordination point for ATP. The tract at residues 30 to 59 (STGDMLRAAIKEGTPLGLEAKKVMDAGQLI) is NMP. Residues Thr-31, Arg-36, 57 to 59 (QLI), 85 to 88 (GFPR), and Gln-92 contribute to the AMP site. Residues 122–159 (GRRVHPGSGRVYHVVYNPPKVADKDNETGEELIIRADD) are LID. ATP-binding positions include Arg-123 and 132 to 133 (VY). Positions 156 and 167 each coordinate AMP. Gln-200 contacts ATP.

Belongs to the adenylate kinase family. In terms of assembly, monomer.

It is found in the cytoplasm. The catalysed reaction is AMP + ATP = 2 ADP. It participates in purine metabolism; AMP biosynthesis via salvage pathway; AMP from ADP: step 1/1. Functionally, catalyzes the reversible transfer of the terminal phosphate group between ATP and AMP. Plays an important role in cellular energy homeostasis and in adenine nucleotide metabolism. The protein is Adenylate kinase of Pseudoalteromonas translucida (strain TAC 125).